Reading from the N-terminus, the 370-residue chain is 3-isopropylmalate dehydrogenase (370 aa).

77 to 90 (GPKWDGVPYDARPE) contributes to the NAD(+) binding site. Substrate-binding residues include Arg97, Arg107, Arg135, and Asp226. Mg(2+)-binding residues include Asp226, Asp250, and Asp254. Residue 290 to 302 (GSAPDIAGKGMAN) participates in NAD(+) binding.

Belongs to the isocitrate and isopropylmalate dehydrogenases family. LeuB type 1 subfamily. In terms of assembly, homodimer. Requires Mg(2+) as cofactor. It depends on Mn(2+) as a cofactor.

It localises to the cytoplasm. The enzyme catalyses (2R,3S)-3-isopropylmalate + NAD(+) = 4-methyl-2-oxopentanoate + CO2 + NADH. It functions in the pathway amino-acid biosynthesis; L-leucine biosynthesis; L-leucine from 3-methyl-2-oxobutanoate: step 3/4. Catalyzes the oxidation of 3-carboxy-2-hydroxy-4-methylpentanoate (3-isopropylmalate) to 3-carboxy-4-methyl-2-oxopentanoate. The product decarboxylates to 4-methyl-2 oxopentanoate. This chain is 3-isopropylmalate dehydrogenase, found in Rhodopseudomonas palustris (strain ATCC BAA-98 / CGA009).